The following is a 470-amino-acid chain: MNDFGIKNMDQVAPVASSYRGTLKRQAAFDTFDGSLLAVFPSLNEEQTLQEVPTGLDSISHDSANCELPLLTPCSKAVMSQALKATFSGFKKEQRRLGIPKNPWLWTEQQVCQWLLWATNEFSLVDVNLQRFGMTGQVLCNLGKERFLELAPDFVGDILWEHLEQMIKENQEKNEDQYEENSHLNSVPHWINSNSLGFGVEQAPYGMQTQSYPKGGLLDGLCPASSAPSTLGPEQDFQMFPKARLNTVSVNYCSVGQDFPAGSLNLLSSASGKPRDHDSAETGGDSFESSESLLQSWNSQSSLLDVQRVPSFESFEDDCSQSLGLSKPTMSFKDYIQDRSDPVEQGKPVIPAAVLAGFTGSGPIQLWQFLLELLSDKSCQSFISWTGDGWEFKLADPDEVARRWGKRKNKPKMNYEKLSRGLRYYYDKNIIHKTSGKRYVYRFVCDLQNLLGFTPEELHAILGVQPDTED.

A PNT domain is found at 85-170 (ATFSGFKKEQ…EHLEQMIKEN (86 aa)). The residue at position 225 (Ser-225) is a Phosphoserine. Residues 270-291 (ASGKPRDHDSAETGGDSFESSE) form a disordered region. A phosphoserine mark is found at Ser-296, Ser-299, and Ser-302. The ETS DNA-binding region spans 364–444 (IQLWQFLLEL…SGKRYVYRFV (81 aa)).

It belongs to the ETS family. Post-translationally, phosphorylation by CDK10 at Ser-225 may create a phosphodegron that targets ETS2 for proteasomal degradation.

It is found in the nucleus. Functionally, transcription factor activating transcription. Binds specifically the GGA DNA motif in gene promoters and stimulates transcription of those genes. The chain is Protein C-ets-2 (ETS2) from Bos taurus (Bovine).